Here is a 383-residue protein sequence, read N- to C-terminus: Xylose/arabinose import ATP-binding protein XacK (383 aa).

In terms of domain architecture, ABC transporter spans 4–240; the sequence is LTLDDVTKVY…PNNLFVAGFI (237 aa). 41–48 contacts ATP; sequence GPSGCGKS.

It belongs to the ABC transporter superfamily. Carbohydrate uptake transporter-1 (CUT1) (TC 3.A.1.1) family. In terms of assembly, the complex is composed of two ATP-binding proteins (XacJ and XacK), two transmembrane proteins (XacH and XacI) and a solute-binding protein (XacG).

The protein resides in the cell membrane. It catalyses the reaction D-xylose(out) + ATP + H2O = D-xylose(in) + ADP + phosphate + H(+). The catalysed reaction is L-arabinose(out) + ATP + H2O = L-arabinose(in) + ADP + phosphate + H(+). Its function is as follows. Part of the ABC transporter complex XacGHIJK involved in the uptake of xylose and arabinose. Responsible for energy coupling to the transport system. The polypeptide is Xylose/arabinose import ATP-binding protein XacK (Haloferax volcanii (strain ATCC 29605 / DSM 3757 / JCM 8879 / NBRC 14742 / NCIMB 2012 / VKM B-1768 / DS2) (Halobacterium volcanii)).